Here is a 317-residue protein sequence, read N- to C-terminus: Olfactory receptor 5AP2 (317 aa).

Residues 1-32 are Extracellular-facing; it reads MVRSGKGIQNKNATEVTEFILLGLSDNPDLQG. Asn12 is a glycosylation site (N-linked (GlcNAc...) asparagine). The helical transmembrane segment at 33-53 threads the bilayer; it reads VLFALFLIIYTMTLVGNLGMM. The Cytoplasmic segment spans residues 54-61; sequence ALIKIDRS. The chain crosses the membrane as a helical span at residues 62 to 82; that stretch reads LHTPMYFFLSSLSFVDASYSS. At 83 to 106 the chain is on the extracellular side; sequence SVTPKMLVNLMAEDKSISFNGCAT. A disulfide bond links Cys104 and Cys196. A helical membrane pass occupies residues 107-127; the sequence is QFFFFGSFLGTECFLLAMMAY. Residues 128 to 140 are Cytoplasmic-facing; the sequence is DRYAAIWNPLLYP. A helical transmembrane segment spans residues 141-161; sequence VLMSGRICFMLVSTSFLAGFG. Over 162–203 the chain is Extracellular; that stretch reads NAAIHTGMTFRLSFCGSNKINHFYCDTPPLLKLSCSDTHING. A helical membrane pass occupies residues 204–224; sequence IVIMAFSSFNVISCVLIVLIS. Residues 225–244 are Cytoplasmic-facing; it reads YLCILIAILKMPSAEGRHKA. A helical membrane pass occupies residues 245-265; it reads FSTCASHLMAVTIFFGTILFM. Over 266-278 the chain is Extracellular; that stretch reads YLRPTSSYSMEQD. A helical membrane pass occupies residues 279 to 299; that stretch reads KVVSVFYTVVIPMLNPLIYSL. The Cytoplasmic segment spans residues 300 to 317; sequence KNKDVKKAVKKILHNYVV.

Belongs to the G-protein coupled receptor 1 family.

It is found in the cell membrane. In terms of biological role, odorant receptor. The polypeptide is Olfactory receptor 5AP2 (Mus musculus (Mouse)).